Reading from the N-terminus, the 175-residue chain is Protein OPG036 (175 aa).

This sequence belongs to the poxviridae OPG036 family.

The protein localises to the host nucleus. Its function is as follows. Plays a role in the inhibition of host innate immune response. Within the host nucleus, inhibits activation of interferon-beta promoter by inhibiting IRF3 activation. The sequence is that of Protein OPG036 (OPG036) from Bos taurus (Bovine).